The chain runs to 424 residues: Homeobox-containing protein 1 (424 aa).

The HNF-p1 domain maps to 1 to 30; sequence MLFTIEQLELIKKLQHTGMSSDQLLKAFGE. One can recognise a POU-specific atypical domain in the interval 103–199; that stretch reads SQRTPMKEIT…PNKLAAFLAD (97 aa). Residues 215–291 constitute a DNA-binding region (homeobox); the sequence is QRRERYVFRP…NKRKELRRRS (77 aa). Residues 291 to 345 are disordered; that stretch reads SAEASAASTSSASSSASSTANHDSVSVSSMSPRDEETSSRNTTPETAISPSPAVS. Positions 293–310 are enriched in low complexity; sequence EASAASTSSASSSASSTA. Polar residues-rich tracts occupy residues 311 to 321 and 329 to 345; these read NHDSVSVSSMS and SRNTTPETAISPSPAVS.

Belongs to the HMBOX1 homeobox family. In terms of tissue distribution, expressed in both AWC neurons. Also expressed in the FLP mechanosensory neurons.

It is found in the nucleus. Transcriptional repressor which maintains cell fate asymmetry of AWC neurons in adults by repressing the expression of multiple AWC (OFF) genes, including srsx-3 in the AWC (ON) neuron. The sequence is that of Homeobox-containing protein 1 from Caenorhabditis elegans.